A 228-amino-acid polypeptide reads, in one-letter code: Ribonuclease 3 (228 aa).

Residues 5-134 form the RNase III domain; that stretch reads RSKLEKDYGI…FLGALLLDKG (130 aa). Mg(2+) is bound at residue E47. The active site involves D51. D120 and E123 together coordinate Mg(2+). E123 is a catalytic residue. The 69-residue stretch at 160-228 folds into the DRBM domain; the sequence is DYKTSLQELL…AAKNALATLQ (69 aa).

The protein belongs to the ribonuclease III family. As to quaternary structure, homodimer. Requires Mg(2+) as cofactor.

The protein localises to the cytoplasm. The catalysed reaction is Endonucleolytic cleavage to 5'-phosphomonoester.. Functionally, digests double-stranded RNA. Involved in the processing of primary rRNA transcript to yield the immediate precursors to the large and small rRNAs (23S and 16S). Processes some mRNAs, and tRNAs when they are encoded in the rRNA operon. Processes pre-crRNA and tracrRNA of type II CRISPR loci if present in the organism. This is Ribonuclease 3 from Streptococcus agalactiae serotype III (strain NEM316).